We begin with the raw amino-acid sequence, 151 residues long: UPF0178 protein YaiI (151 aa).

Belongs to the UPF0178 family.

This Salmonella paratyphi B (strain ATCC BAA-1250 / SPB7) protein is UPF0178 protein YaiI.